The sequence spans 81 residues: Sulfur carrier protein TusA (81 aa).

Catalysis depends on Cys-19, which acts as the Cysteine persulfide intermediate.

The protein belongs to the sulfur carrier protein TusA family.

The protein resides in the cytoplasm. Functionally, sulfur carrier protein which probably makes part of a sulfur-relay system. The polypeptide is Sulfur carrier protein TusA (Shewanella putrefaciens (strain CN-32 / ATCC BAA-453)).